Reading from the N-terminus, the 285-residue chain is MKYIGAHVSAAGGLANAAIRAAEIDATAFALFTKNQRQWRAAPLTTQTIDEFKAACEKYHYTSAQILPHDSYLINLGHPVAEALEKSRDAFIDEMQRCEQLGLSLLNFHPGSHLMQISEEDCLARIAESINIALDKTQGVTAVIENTAGQGSNLGFKFEHLAAIIDGVEDKSRVGVCIDTCHAFAAGYDLRTPAECEKTFADFARIVGFKYLRGMHLNDAKSTFGSRVDRHHSLGEGNIGHDAFRWIMQDDRFDGIPLILETINPDIWAEEIAWLKAQQTEKAVA.

Zn(2+) contacts are provided by histidine 69, histidine 109, glutamate 145, aspartate 179, histidine 182, histidine 216, aspartate 229, histidine 231, and glutamate 261.

This sequence belongs to the AP endonuclease 2 family. The cofactor is Zn(2+).

The enzyme catalyses Endonucleolytic cleavage to 5'-phosphooligonucleotide end-products.. In terms of biological role, endonuclease IV plays a role in DNA repair. It cleaves phosphodiester bonds at apurinic or apyrimidinic (AP) sites, generating a 3'-hydroxyl group and a 5'-terminal sugar phosphate. This Escherichia coli O127:H6 (strain E2348/69 / EPEC) protein is Probable endonuclease 4.